A 227-amino-acid chain; its full sequence is uncharacterized protein (227 aa).

The protein to ORF5 in pFZ1.

This is an uncharacterized protein from Methanothermobacter thermautotrophicus (Methanobacterium thermoformicicum).